The primary structure comprises 188 residues: Accessory gene regulator protein B (188 aa).

A run of 4 helical transmembrane segments spans residues 49–69, 82–102, 104–124, and 163–183; these read VALLFHTFLYTLITHLTYFFV, LLCHIQNLVLFVALPWSIVHF, VSWTFMIFVAFIAFIIIICYA, and YMQLIALGMCIEAITLLPIFF.

Belongs to the AgrB family.

It is found in the cell membrane. Functionally, essential for the production of a quorum sensing system signal molecule, the autoinducing peptide (AIP). This quorum sensing system is responsible for the regulation of the expression of virulence factor genes. Involved in the proteolytic processing of AgrD, the precursor of AIP. In Staphylococcus lugdunensis, this protein is Accessory gene regulator protein B.